The chain runs to 456 residues: tRNA modification GTPase MnmE (456 aa).

(6S)-5-formyl-5,6,7,8-tetrahydrofolate contacts are provided by arginine 24, glutamate 81, and lysine 120. In terms of domain architecture, TrmE-type G spans 216–379 (GMTVVIAGRP…LRDHLKACMG (164 aa)). Asparagine 226 is a binding site for K(+). GTP-binding positions include 226–231 (NAGKSS), 245–251 (TDIAGTT), 270–273 (DTAG), and 335–338 (NKAD). Position 230 (serine 230) interacts with Mg(2+). K(+)-binding residues include threonine 245, isoleucine 247, and threonine 250. Residue threonine 251 participates in Mg(2+) binding. Position 456 (lysine 456) interacts with (6S)-5-formyl-5,6,7,8-tetrahydrofolate.

The protein belongs to the TRAFAC class TrmE-Era-EngA-EngB-Septin-like GTPase superfamily. TrmE GTPase family. In terms of assembly, homodimer. Heterotetramer of two MnmE and two MnmG subunits. Requires K(+) as cofactor.

It is found in the cytoplasm. Exhibits a very high intrinsic GTPase hydrolysis rate. Involved in the addition of a carboxymethylaminomethyl (cmnm) group at the wobble position (U34) of certain tRNAs, forming tRNA-cmnm(5)s(2)U34. This Pseudomonas putida (strain GB-1) protein is tRNA modification GTPase MnmE.